Consider the following 1247-residue polypeptide: DNA-directed RNA polymerase subunit beta (1247 aa).

It belongs to the RNA polymerase beta chain family. In terms of assembly, in plastids the minimal PEP RNA polymerase catalytic core is composed of four subunits: alpha, beta, beta', and beta''. When a (nuclear-encoded) sigma factor is associated with the core the holoenzyme is formed, which can initiate transcription.

It localises to the plastid. It carries out the reaction RNA(n) + a ribonucleoside 5'-triphosphate = RNA(n+1) + diphosphate. In terms of biological role, DNA-dependent RNA polymerase catalyzes the transcription of DNA into RNA using the four ribonucleoside triphosphates as substrates. This is DNA-directed RNA polymerase subunit beta (rpoB) from Helicosporidium sp. subsp. Simulium jonesii (Green alga).